A 633-amino-acid polypeptide reads, in one-letter code: Chaperone protein DnaK (633 aa).

At Thr-196 the chain carries Phosphothreonine; by autocatalysis. Residues 594–633 (NLYGQPGAEPQPETNGHAGGSKGGDGAVNAEYEVIDGDDK) are disordered. Over residues 610–619 (HAGGSKGGDG) the composition is skewed to gly residues.

Belongs to the heat shock protein 70 family.

Acts as a chaperone. The polypeptide is Chaperone protein DnaK (Chlorobaculum tepidum (strain ATCC 49652 / DSM 12025 / NBRC 103806 / TLS) (Chlorobium tepidum)).